The primary structure comprises 540 residues: Phenylalanine--tRNA ligase beta subunit (540 aa).

Residues 268 to 343 form the B5 domain; that stretch reads LQHKSIKITA…ITYGYNNLSP (76 aa). Residues Asp-321, Asp-327, Glu-330, and Glu-331 each contribute to the Mg(2+) site.

Belongs to the phenylalanyl-tRNA synthetase beta subunit family. Type 2 subfamily. In terms of assembly, tetramer of two alpha and two beta subunits. It depends on Mg(2+) as a cofactor.

Its subcellular location is the cytoplasm. The enzyme catalyses tRNA(Phe) + L-phenylalanine + ATP = L-phenylalanyl-tRNA(Phe) + AMP + diphosphate + H(+). The protein is Phenylalanine--tRNA ligase beta subunit of Sulfurisphaera tokodaii (strain DSM 16993 / JCM 10545 / NBRC 100140 / 7) (Sulfolobus tokodaii).